Consider the following 140-residue polypeptide: MERTLTILKPDCVRKQLIGAVTDKIERAGFRIVAMKKTRLTKETAGAFYAVHKERPFYGELVEFMSSGPCVPMILEKENAVADFRTLIGATDPAEAAEGTVRKLYADSKGENIVHGSDSAENAAIEGAFFFAAEEVVRVD.

Positions 9, 57, 85, 91, 102, and 112 each coordinate ATP. Catalysis depends on histidine 115, which acts as the Pros-phosphohistidine intermediate.

It belongs to the NDK family. In terms of assembly, homotetramer. Mg(2+) is required as a cofactor.

The protein localises to the cytoplasm. The enzyme catalyses a 2'-deoxyribonucleoside 5'-diphosphate + ATP = a 2'-deoxyribonucleoside 5'-triphosphate + ADP. The catalysed reaction is a ribonucleoside 5'-diphosphate + ATP = a ribonucleoside 5'-triphosphate + ADP. Major role in the synthesis of nucleoside triphosphates other than ATP. The ATP gamma phosphate is transferred to the NDP beta phosphate via a ping-pong mechanism, using a phosphorylated active-site intermediate. The sequence is that of Nucleoside diphosphate kinase from Chlorobaculum parvum (strain DSM 263 / NCIMB 8327) (Chlorobium vibrioforme subsp. thiosulfatophilum).